The primary structure comprises 513 residues: Fructose import ATP-binding protein FruK (513 aa).

ABC transporter domains follow at residues 8 to 244 (VVMK…IGKS) and 262 to 505 (PGEK…IANT). 40 to 47 (GENGAGKS) lines the ATP pocket.

The protein belongs to the ABC transporter superfamily. As to quaternary structure, the complex is composed of an ATP-binding protein (FruK), two transmembrane proteins (FruF and FruG) and a solute-binding protein (FruE).

It is found in the cell membrane. The enzyme catalyses D-fructose(out) + ATP + H2O = D-fructose(in) + ADP + phosphate + H(+). Part of the high-affinity ABC transporter complex FruEKFG involved in fructose uptake. Can also transport ribose and xylose, with lower affinity. Probably responsible for energy coupling to the transport system. The chain is Fructose import ATP-binding protein FruK from Bifidobacterium longum (strain NCC 2705).